Consider the following 376-residue polypeptide: Small RNA 2'-O-methyltransferase (376 aa).

S-adenosyl-L-methionine-binding residues include threonine 49, aspartate 67, and serine 103. The Mg(2+) site is built by glutamate 121, glutamate 124, histidine 125, and histidine 171.

The protein belongs to the methyltransferase superfamily. HEN1 family. Mg(2+) serves as cofactor.

It localises to the cytoplasm. The enzyme catalyses small RNA 3'-end nucleotide + S-adenosyl-L-methionine = small RNA 3'-end 2'-O-methylnucleotide + S-adenosyl-L-homocysteine + H(+). Functionally, methyltransferase that adds a 2'-O-methyl group at the 3'-end of piRNAs, a class of 24 to 30 nucleotide RNAs that are generated by a Dicer-independent mechanism and are primarily derived from transposons and other repeated sequence elements. This probably protects the 3'-end of piRNAs from uridylation activity and subsequent degradation. Stabilization of piRNAs is essential for gametogenesis. This chain is Small RNA 2'-O-methyltransferase (HENMT1), found in Gallus gallus (Chicken).